Here is a 95-residue protein sequence, read N- to C-terminus: Aspartyl/glutamyl-tRNA(Asn/Gln) amidotransferase subunit C (95 aa).

It belongs to the GatC family. In terms of assembly, heterotrimer of A, B and C subunits.

It carries out the reaction L-glutamyl-tRNA(Gln) + L-glutamine + ATP + H2O = L-glutaminyl-tRNA(Gln) + L-glutamate + ADP + phosphate + H(+). The catalysed reaction is L-aspartyl-tRNA(Asn) + L-glutamine + ATP + H2O = L-asparaginyl-tRNA(Asn) + L-glutamate + ADP + phosphate + 2 H(+). Its function is as follows. Allows the formation of correctly charged Asn-tRNA(Asn) or Gln-tRNA(Gln) through the transamidation of misacylated Asp-tRNA(Asn) or Glu-tRNA(Gln) in organisms which lack either or both of asparaginyl-tRNA or glutaminyl-tRNA synthetases. The reaction takes place in the presence of glutamine and ATP through an activated phospho-Asp-tRNA(Asn) or phospho-Glu-tRNA(Gln). In Bartonella quintana (strain Toulouse) (Rochalimaea quintana), this protein is Aspartyl/glutamyl-tRNA(Asn/Gln) amidotransferase subunit C.